The primary structure comprises 1770 residues: Transposon Ty2-C Gag-Pol polyprotein (1770 aa).

3 stretches are compositionally biased toward polar residues: residues 1–11 (MESQQLHQNPR), 19–39 (ASVT…SASN), and 49–60 (KVNSQQETTPGT). 2 disordered regions span residues 1–88 (MESQ…YQQH) and 355–453 (SQYK…LPDH). Residues 295 to 397 (ENNINVSDRL…SSKPRAAKAH (103 aa)) are RNA-binding. Residues 369–382 (TSPNTTNTKVTTRN) are compositionally biased toward low complexity. Composition is skewed to polar residues over residues 399 to 408 (IATSSKFSRV) and 415 to 435 (ESTV…GQQQ). Residue aspartate 457 is the For protease activity; shared with dimeric partner of the active site. An integrase-type zinc finger-like region spans residues 579–636 (NVNKSKSVNKYPYPLIHRMLGHANFRSIQKSLKKNAVTYLKESDIEWSNASTYQCPDC). Residues 656–831 (ESYEPFQYLH…AGLDITTILP (176 aa)) enclose the Integrase catalytic domain. Mg(2+) is bound by residues aspartate 667 and aspartate 732. Disordered stretches follow at residues 1003–1038 (EMGG…MIDL) and 1057–1205 (GGTE…TEIE). 2 stretches are compositionally biased toward polar residues: residues 1009 to 1024 (ESDT…FTAR) and 1065 to 1082 (QRNS…STPS). Positions 1193-1227 (KKRSLEDNETEIEVSRDTWNNKNMRSLEPPRSKKR) match the Bipartite nuclear localization signal motif. In terms of domain architecture, Reverse transcriptase Ty1/copia-type spans 1353-1491 (NDYYITQLDI…DILGLEIKYQ (139 aa)). Aspartate 1361, aspartate 1442, aspartate 1443, aspartate 1625, glutamate 1667, and aspartate 1700 together coordinate Mg(2+). Positions 1625 to 1767 (DASYGNQPYY…IKTFKLLTNK (143 aa)) constitute an RNase H Ty1/copia-type domain.

As to quaternary structure, the capsid protein forms a homotrimer, from which the VLPs are assembled. The protease is a homodimer, whose active site consists of two apposed aspartic acid residues. Post-translationally, initially, virus-like particles (VLPs) are composed of the structural unprocessed proteins Gag and Gag-Pol, and also contain the host initiator methionine tRNA (tRNA(i)-Met) which serves as a primer for minus-strand DNA synthesis, and a dimer of genomic Ty RNA. Processing of the polyproteins occurs within the particle and proceeds by an ordered pathway, called maturation. First, the protease (PR) is released by autocatalytic cleavage of the Gag-Pol polyprotein, and this cleavage is a prerequisite for subsequent processing at the remaining sites to release the mature structural and catalytic proteins. Maturation takes place prior to the RT reaction and is required to produce transposition-competent VLPs.

The protein localises to the cytoplasm. It is found in the nucleus. It catalyses the reaction DNA(n) + a 2'-deoxyribonucleoside 5'-triphosphate = DNA(n+1) + diphosphate. The enzyme catalyses Endonucleolytic cleavage to 5'-phosphomonoester.. Its function is as follows. Capsid protein (CA) is the structural component of the virus-like particle (VLP), forming the shell that encapsulates the retrotransposons dimeric RNA genome. The particles are assembled from trimer-clustered units and there are holes in the capsid shells that allow for the diffusion of macromolecules. CA also has nucleocapsid-like chaperone activity, promoting primer tRNA(i)-Met annealing to the multipartite primer-binding site (PBS), dimerization of Ty2 RNA and initiation of reverse transcription. In terms of biological role, the aspartyl protease (PR) mediates the proteolytic cleavages of the Gag and Gag-Pol polyproteins after assembly of the VLP. Reverse transcriptase/ribonuclease H (RT) is a multifunctional enzyme that catalyzes the conversion of the retro-elements RNA genome into dsDNA within the VLP. The enzyme displays a DNA polymerase activity that can copy either DNA or RNA templates, and a ribonuclease H (RNase H) activity that cleaves the RNA strand of RNA-DNA heteroduplexes during plus-strand synthesis and hydrolyzes RNA primers. The conversion leads to a linear dsDNA copy of the retrotransposon that includes long terminal repeats (LTRs) at both ends. Functionally, integrase (IN) targets the VLP to the nucleus, where a subparticle preintegration complex (PIC) containing at least integrase and the newly synthesized dsDNA copy of the retrotransposon must transit the nuclear membrane. Once in the nucleus, integrase performs the integration of the dsDNA into the host genome. The sequence is that of Transposon Ty2-C Gag-Pol polyprotein (TY2B-C) from Saccharomyces cerevisiae (strain ATCC 204508 / S288c) (Baker's yeast).